Consider the following 459-residue polypeptide: Phosphomethylpyrimidine synthase (459 aa).

Residues Asn80, Met109, Tyr139, His175, 195–197 (SRG), 236–239 (DSLR), and Glu275 contribute to the substrate site. His279 contributes to the Zn(2+) binding site. Tyr302 serves as a coordination point for substrate. A Zn(2+)-binding site is contributed by His343. [4Fe-4S] cluster-binding residues include Cys423, Cys426, and Cys431.

Belongs to the ThiC family. [4Fe-4S] cluster serves as cofactor.

It carries out the reaction 5-amino-1-(5-phospho-beta-D-ribosyl)imidazole + S-adenosyl-L-methionine = 4-amino-2-methyl-5-(phosphooxymethyl)pyrimidine + CO + 5'-deoxyadenosine + formate + L-methionine + 3 H(+). It participates in cofactor biosynthesis; thiamine diphosphate biosynthesis. Catalyzes the synthesis of the hydroxymethylpyrimidine phosphate (HMP-P) moiety of thiamine from aminoimidazole ribotide (AIR) in a radical S-adenosyl-L-methionine (SAM)-dependent reaction. The chain is Phosphomethylpyrimidine synthase from Prochlorococcus marinus (strain MIT 9303).